The chain runs to 105 residues: Small ribosomal subunit protein uS10 (105 aa).

The protein belongs to the universal ribosomal protein uS10 family. In terms of assembly, part of the 30S ribosomal subunit.

In terms of biological role, involved in the binding of tRNA to the ribosomes. This chain is Small ribosomal subunit protein uS10, found in Thermus thermophilus (strain ATCC BAA-163 / DSM 7039 / HB27).